The sequence spans 808 residues: Copal-8-ol diphosphate hydratase, chloroplastic (808 aa).

A chloroplast-targeting transit peptide spans 1–50; it reads MAFTFTSAHLFLPVTENHSVHVNYSIPPGNWRLWSTAKGGSNKLDIRRLR. Residues 190–219 adopt a coiled-coil conformation; that stretch reads DKCQKGLKFFRDNISKLEKENVEASAQMLS. Lysine 256 contacts substrate. Aspartate 391 and aspartate 393 together coordinate Mg(2+). Residues 391–394 carry the DXDD motif motif; it reads DLDD. Lysine 477 is a substrate binding site.

It belongs to the terpene synthase family. It depends on Mg(2+) as a cofactor. Expressed in stems, leaves and trichomes. Not detected in roots and seeds. Higher expression in young leaves than in fully expanded leaves.

Its subcellular location is the plastid. It is found in the chloroplast. It carries out the reaction (2E,6E,10E)-geranylgeranyl diphosphate + H2O = 8-hydroxycopalyl diphosphate. Its pathway is secondary metabolite biosynthesis; terpenoid biosynthesis. Functionally, involved in the biosynthesis of oxygen-containing labdane-type diterpenes that may be implicated in direct and indirect defense mechanisms. No activity with geranyl diphosphate or farnesyl diphosphate as substrate. The protein is Copal-8-ol diphosphate hydratase, chloroplastic of Cistus creticus subsp. creticus (Rock rose).